The following is an 849-amino-acid chain: Ribosome biogenesis protein ERB1 (849 aa).

The tract at residues 1-130 (MARNSIKKSP…PKDDDLSRIN (130 aa)) is disordered. Acidic residues-rich tracts occupy residues 29 to 44 (EAEE…DELN) and 51 to 123 (ASDD…EPKD). Residues 286 to 405 (RFVPSKHEAK…LRQVPGYQDS (120 aa)) are required for interaction with NOP7. The tract at residues 405 to 441 (SVRERFERSLDLYLAPRVRHNKLNIDPDSLIPDLPSP) is required for interaction with YTM1. WD repeat units lie at residues 457 to 496 (GHTG…QVYK) and 505 to 545 (NNED…FDIE). Residues 569 to 581 (KISSQKEEDNKES) are compositionally biased toward basic and acidic residues. Residues 569 to 619 (KISSQKEEDNKESDNEDEDEEEDNDDDDDDDEPETSSTVEPKKEVAKWYPP) form a disordered region. Residues 582 to 602 (DNEDEDEEEDNDDDDDDDEPE) show a composition bias toward acidic residues. 5 WD repeats span residues 633–675 (QCRK…SQSP), 678–716 (KSKG…LLKK), 719–758 (PGVR…TPYK), 762–802 (YHEK…DLMT), and 818–849 (INQI…LWTT).

This sequence belongs to the WD repeat BOP1/ERB1 family. As to quaternary structure, component of the NOP7 complex, composed of ERB1, NOP7 and YTM1. The complex is held together by ERB1, which interacts with NOP7 via its N-terminal domain and with YTM1 via a high-affinity interaction between the seven-bladed beta-propeller domains of the 2 proteins. The NOP7 complex associates with the 66S pre-ribosome.

Its subcellular location is the nucleus. It localises to the nucleolus. The protein resides in the nucleoplasm. Its function is as follows. Component of the NOP7 complex, which is required for maturation of the 25S and 5.8S ribosomal RNAs and formation of the 60S ribosome. The polypeptide is Ribosome biogenesis protein ERB1 (Candida albicans (strain SC5314 / ATCC MYA-2876) (Yeast)).